The chain runs to 309 residues: Taste receptor type 2 member 20 (309 aa).

The Extracellular portion of the chain corresponds to 1–6 (MMSFLH). A helical transmembrane segment spans residues 7–27 (IVFSILVVVAFILGNFANGFI). Residues 28-46 (ALINFIAWVKRQKISSADQ) are Cytoplasmic-facing. A helical membrane pass occupies residues 47 to 67 (IIAALAVSRVGLLWVILLHWY). Topologically, residues 68–79 (STVLNPTSSNLK) are extracellular. The chain crosses the membrane as a helical span at residues 80-100 (VIIFISNAWAVTNHFSIWLAT). Residues 101–125 (SLSIFYLLKIVNFSRLIFHHLKRKA) are Cytoplasmic-facing. Residues 126–146 (KSVVLVIVLGSLFFLVCHLVM) traverse the membrane as a helical segment. Topologically, residues 147-178 (KHTYINVWTEECEGNVTWKIKLRNAMHLSNLT) are extracellular. N-linked (GlcNAc...) asparagine glycosylation is found at asparagine 161 and asparagine 176. The helical transmembrane segment at 179 to 199 (VAMLANLIPFTLTLISFLLLI) threads the bilayer. Residues 200–229 (YSLCKHLKKMQLHGKGSQDPSTKIHIKALQ) are Cytoplasmic-facing. The chain crosses the membrane as a helical span at residues 230-250 (TVTSFLILLAIYFLCLIISFW). The Extracellular portion of the chain corresponds to 251 to 259 (NFKMRPKEI). A helical transmembrane segment spans residues 260–280 (VLMLCQAFGIIYPSFHSFILI). Residues 281-309 (WGNKTLKQTFLSVLWQVTCWAKGQNQSTP) lie on the Cytoplasmic side of the membrane.

The protein belongs to the G-protein coupled receptor T2R family. As to expression, expressed in subsets of taste receptor cells of the tongue and exclusively in gustducin-positive cells.

It is found in the membrane. In terms of biological role, receptor that may play a role in the perception of bitterness and is gustducin-linked. May play a role in sensing the chemical composition of the gastrointestinal content. The activity of this receptor may stimulate alpha gustducin, mediate PLC-beta-2 activation and lead to the gating of TRPM5. In Homo sapiens (Human), this protein is Taste receptor type 2 member 20 (TAS2R20).